Reading from the N-terminus, the 451-residue chain is Macrophage scavenger receptor types I and II (451 aa).

Residues 1 to 50 (MEQWDHFHNQQEDTDSCSESVKFDARSMTALLPPNPKNSPSLQEKLKSFK) are Cytoplasmic-facing. Residue Ser-27 is modified to Phosphoserine. Residues 51–76 (AALIALYLLVFAVLIPLIGIVAAQLL) traverse the membrane as a helical; Signal-anchor for type II membrane protein segment. Positions 77–109 (KWETKNCSVSSTNANDITQSLTGKGNDSEEEMR) are spacer. Residues 77–451 (KWETKNCSVS…SEDAGVTCTL (375 aa)) lie on the Extracellular side of the membrane. Asn-82, Asn-102, Asn-143, Asn-184, Asn-221, Asn-249, and Asn-267 each carry an N-linked (GlcNAc...) asparagine glycan. Residues 171–255 (NAIDEISKSL…VLNNITNDLR (85 aa)) are a coiled coil. The disordered stretch occupies residues 267-346 (NITLIQGPPG…EKGSGNTLTP (80 aa)). The Collagen-like domain maps to 273-341 (GPPGPPGEKG…KGQKGEKGSG (69 aa)). One can recognise an SRCR domain in the interval 350 to 450 (VRLVGGSGPH…HSEDAGVTCT (101 aa)). Intrachain disulfides connect Cys-375–Cys-439, Cys-388–Cys-449, and Cys-419–Cys-429.

In terms of assembly, homotrimer. Interacts with MYO18A. In terms of tissue distribution, isoform I, isoform II and isoform III are expressed in monocyte-derived macrophages. Isoform I and isoform II are expressed in the liver, placenta and brain.

The protein localises to the membrane. Functionally, membrane glycoproteins implicated in the pathologic deposition of cholesterol in arterial walls during atherogenesis. Two types of receptor subunits exist. These receptors mediate the endocytosis of a diverse group of macromolecules, including modified low density lipoproteins (LDL). Isoform III does not internalize acetylated LDL. The sequence is that of Macrophage scavenger receptor types I and II (MSR1) from Homo sapiens (Human).